Consider the following 313-residue polypeptide: MTEFKHETVLLKEATAALAVKPAGTYVDATLGRGGHTRQILNHLTTGRLIAFDQDEAAIATVTADFGTLPKQLTLVHRNFRDLTDALTTLGITEVDGILYDLGVSSPQFDDSKRGFSYRFDAPLDMRMDQRQTLDAKTIVNEWPYADLVRIFSRYGEEHFSKQIARRIEQARTVQPITTTFQLVELIKAGIPAKARRTGGHPAKKVFQAIRIAVNDELSALESSLEQALKLINVGGRISVITFQSLEDRLVKTMFKEVSSVQDVPRGLPVIPASAQPNYRLVNRKPILPSEEELAVNHRAHSAKLRVIEKIHD.

Residues 34–36 (GGH), Asp53, Phe80, Asp101, and Gln108 contribute to the S-adenosyl-L-methionine site.

This sequence belongs to the methyltransferase superfamily. RsmH family.

The protein resides in the cytoplasm. The catalysed reaction is cytidine(1402) in 16S rRNA + S-adenosyl-L-methionine = N(4)-methylcytidine(1402) in 16S rRNA + S-adenosyl-L-homocysteine + H(+). Functionally, specifically methylates the N4 position of cytidine in position 1402 (C1402) of 16S rRNA. The chain is Ribosomal RNA small subunit methyltransferase H from Lacticaseibacillus paracasei (strain ATCC 334 / BCRC 17002 / CCUG 31169 / CIP 107868 / KCTC 3260 / NRRL B-441) (Lactobacillus paracasei).